The following is a 593-amino-acid chain: Elongation factor 4 (593 aa).

The region spanning 2-181 is the tr-type G domain; that stretch reads KNIRNFCIIA…AVVERIPHPT (180 aa). GTP is bound by residues 14-19 and 128-131; these read DHGKST and NKCD.

It belongs to the TRAFAC class translation factor GTPase superfamily. Classic translation factor GTPase family. LepA subfamily.

It is found in the cell inner membrane. It catalyses the reaction GTP + H2O = GDP + phosphate + H(+). Its function is as follows. Required for accurate and efficient protein synthesis under certain stress conditions. May act as a fidelity factor of the translation reaction, by catalyzing a one-codon backward translocation of tRNAs on improperly translocated ribosomes. Back-translocation proceeds from a post-translocation (POST) complex to a pre-translocation (PRE) complex, thus giving elongation factor G a second chance to translocate the tRNAs correctly. Binds to ribosomes in a GTP-dependent manner. The sequence is that of Elongation factor 4 from Phocaeicola vulgatus (strain ATCC 8482 / DSM 1447 / JCM 5826 / CCUG 4940 / NBRC 14291 / NCTC 11154) (Bacteroides vulgatus).